The following is a 65-amino-acid chain: MVSVQINDNETIDKMLKRFKKKYERAGVLKEYRANAYFVKPSIDNRLKRSRSRRRAQRANEERNS.

It belongs to the bacterial ribosomal protein bS21 family.

The sequence is that of Small ribosomal subunit protein bS21 from Chlorobium chlorochromatii (strain CaD3).